The following is a 111-amino-acid chain: Large ribosomal subunit protein uL22 (111 aa).

It belongs to the universal ribosomal protein uL22 family. Part of the 50S ribosomal subunit.

In terms of biological role, this protein binds specifically to 23S rRNA; its binding is stimulated by other ribosomal proteins, e.g. L4, L17, and L20. It is important during the early stages of 50S assembly. It makes multiple contacts with different domains of the 23S rRNA in the assembled 50S subunit and ribosome. Its function is as follows. The globular domain of the protein is located near the polypeptide exit tunnel on the outside of the subunit, while an extended beta-hairpin is found that lines the wall of the exit tunnel in the center of the 70S ribosome. The polypeptide is Large ribosomal subunit protein uL22 (Fusobacterium nucleatum subsp. nucleatum (strain ATCC 25586 / DSM 15643 / BCRC 10681 / CIP 101130 / JCM 8532 / KCTC 2640 / LMG 13131 / VPI 4355)).